Reading from the N-terminus, the 344-residue chain is Selenide, water dikinase (344 aa).

Cys-16 is a catalytic residue. ATP-binding positions include Lys-19 and 47 to 49; that span reads SRD. Asp-50 is a Mg(2+) binding site. Residues Asp-67, Asp-90, and 138–140 contribute to the ATP site; that span reads GHS. Asp-90 serves as a coordination point for Mg(2+). Asp-226 is a binding site for Mg(2+).

This sequence belongs to the selenophosphate synthase 1 family. Class I subfamily. In terms of assembly, homodimer. Requires Mg(2+) as cofactor.

The catalysed reaction is hydrogenselenide + ATP + H2O = selenophosphate + AMP + phosphate + 2 H(+). Synthesizes selenophosphate from selenide and ATP. The polypeptide is Selenide, water dikinase (Pseudomonas putida (strain ATCC 47054 / DSM 6125 / CFBP 8728 / NCIMB 11950 / KT2440)).